The sequence spans 1320 residues: Protein brunelleschi (1320 aa).

Residues 313–411 (HRNSSLQEAG…IPGHQRNGDL (99 aa)) form a disordered region. Residues 314–327 (RNSSLQEAGTSPLK) are compositionally biased toward polar residues. Phosphoserine is present on Ser-317. Thr-329 is modified (phosphothreonine). Basic and acidic residues predominate over residues 329–340 (TPEKWRASDATK). The segment covering 345–361 (SDATANNVDSNQPQQRV) has biased composition (polar residues). Residues 362–400 (TSNSSSCSSVSSLVTTATNSSASDTPTTSSSSTSTISAA) show a composition bias toward low complexity. Ser-672 carries the phosphoserine modification. Positions 923–954 (VSTSGHASLPSRVGSPHHRRNEPQNSSFRSTI) are disordered. Residues 945 to 954 (PQNSSFRSTI) are compositionally biased toward polar residues.

This sequence belongs to the NIBP family. As to quaternary structure, may be part of the multisubunit TRAPP (transport protein particle) complex.

The protein localises to the cytoplasm. It localises to the golgi apparatus. Cooperates with Rab11 and fwd/PI4K to mediate the flow of membrane through the Golgi, which is required to support cleavage furrow ingression, therefore promoting cytokinesis in male meiotic cells. This is Protein brunelleschi from Drosophila melanogaster (Fruit fly).